Here is a 525-residue protein sequence, read N- to C-terminus: Transmembrane protein 184C (525 aa).

7 helical membrane-spanning segments follow: residues 17-37 (LLVL…IWKF), 48-68 (SWFI…WGIL), 83-103 (IIRI…ALVY), 121-141 (VIYN…PNLI), 212-232 (YLVI…LLFY), 254-274 (VVFV…LGVI), and 287-307 (AVAT…AAIA). Disordered stretches follow at residues 358–394 (PKKK…PSPG) and 483–525 (LFPS…STDP). Over residues 373 to 388 (SSLLSSSSQDLTSGSS) the composition is skewed to low complexity. Positions 483-502 (LFPSTETSENSMIDTSESQQ) are enriched in polar residues. A compositionally biased stretch (low complexity) spans 503 to 525 (ESSDLCTESSDSSTESSDLSTDP).

The protein belongs to the TMEM184 family.

Its subcellular location is the membrane. Functionally, possible tumor suppressor which may play a role in cell growth. In Mus musculus (Mouse), this protein is Transmembrane protein 184C (Tmem184c).